A 1148-amino-acid chain; its full sequence is Replication factor C subunit 1 (1148 aa).

Residues 46-56 (NSSRKEDDFKQ) show a composition bias toward basic and acidic residues. Disordered stretches follow at residues 46–201 (NSSR…LNDE) and 228–380 (TLAM…TNYQ). Lys50 is covalently cross-linked (Glycyl lysine isopeptide (Lys-Gly) (interchain with G-Cter in SUMO2)). Phosphotyrosine is present on Tyr67. 4 positions are modified to phosphoserine: Ser69, Ser71, Ser73, and Ser108. Thr110 is modified (phosphothreonine). Positions 130–141 (RSTNSHLGTSNM) are enriched in polar residues. The residue at position 156 (Ser156) is a Phosphoserine. A phosphothreonine mark is found at Thr161 and Thr163. Residues Ser164, Ser173, and Ser190 each carry the phosphoserine modification. Positions 234–246 (EEPKTKKARKDTE) are enriched in basic and acidic residues. Ser253 carries the phosphoserine modification. A compositionally biased stretch (basic residues) spans 262-271 (EKHKYPHKVK). Ser281 and Ser283 each carry phosphoserine. Basic and acidic residues predominate over residues 288–308 (SKYESSKESQQHSKSSADKIG). Ser312 carries the post-translational modification Phosphoserine. Basic and acidic residues-rich tracts occupy residues 323-353 (KRKE…ETKT) and 362-376 (AKKE…EKKR). Ser368 is subject to Phosphoserine. Residues 402–492 (GAENCLEGLI…PGKKSKYEIA (91 aa)) form the BRCT domain. Composition is skewed to basic and acidic residues over residues 496–507 (EMKKESKLERTP) and 520–538 (SKKE…RDSL). Residues 496 to 538 (EMKKESKLERTPQKNVQGKRKISPSKKESESKKSRPTSKRDSL) are disordered. The residue at position 537 (Ser537) is a Phosphoserine. 650-657 (SGPPGVGK) is a binding site for ATP. The interval 1081 to 1148 (KASRHSTSPS…RKGKGKSSKK (68 aa)) is disordered. The span at 1094–1105 (EYNEELNEDDSQ) shows a compositional bias: acidic residues. Ser1104 and Ser1106 each carry phosphoserine. The short motif at 1120-1124 (IKKKT) is the Nuclear localization signal element. Basic and acidic residues predominate over residues 1130–1140 (SKPEKDKEPRK).

It belongs to the activator 1 large subunit family. As to quaternary structure, large subunit of the RFC complex, an heteropentameric complex consisting of RFC1 and four small subunits RFC2, RFC3, RFC4 and RFC5; the RFC complex interacts with PCNA and the interaction involves RFC1. In terms of tissue distribution, wide tissue distribution. Undetectable in placental tissue.

It is found in the nucleus. In terms of biological role, subunit of the replication factor C (RFC) complex which acts during elongation of primed DNA templates by DNA polymerases delta and epsilon, and is necessary for ATP-dependent loading of proliferating cell nuclear antigen (PCNA) onto primed DNA. This subunit binds to the primer-template junction. Binds the PO-B transcription element as well as other GA rich DNA sequences. Can bind single- or double-stranded DNA. In Homo sapiens (Human), this protein is Replication factor C subunit 1 (RFC1).